Reading from the N-terminus, the 29-residue chain is GLWSKIKETGKEAAKAAGKAALDKIAEAV.

Valine 29 carries the post-translational modification Valine amide.

In terms of tissue distribution, expressed by the skin glands.

It is found in the secreted. Functionally, has antimicrobial activity. The chain is Dermaseptin-1.2TR from Phyllomedusa trinitatis (Trinidad leaf frog).